Consider the following 153-residue polypeptide: Endoribonuclease YbeY (153 aa).

The Zn(2+) site is built by His116, His120, and His126.

The protein belongs to the endoribonuclease YbeY family. It depends on Zn(2+) as a cofactor.

The protein localises to the cytoplasm. Its function is as follows. Single strand-specific metallo-endoribonuclease involved in late-stage 70S ribosome quality control and in maturation of the 3' terminus of the 16S rRNA. This chain is Endoribonuclease YbeY, found in Clavibacter michiganensis subsp. michiganensis (strain NCPPB 382).